A 159-amino-acid polypeptide reads, in one-letter code: Small ribosomal subunit protein uS7 (159 aa).

Belongs to the universal ribosomal protein uS7 family. Part of the 30S ribosomal subunit. Contacts proteins S9 and S11.

In terms of biological role, one of the primary rRNA binding proteins, it binds directly to 16S rRNA where it nucleates assembly of the head domain of the 30S subunit. Is located at the subunit interface close to the decoding center, probably blocks exit of the E-site tRNA. The chain is Small ribosomal subunit protein uS7 from Wolbachia sp. subsp. Brugia malayi (strain TRS).